Reading from the N-terminus, the 87-residue chain is Xibalbin-2 (87 aa).

An N-terminal signal peptide occupies residues 1–25; that stretch reads MKGVCTRKVLYFFMAVILFVAIVAS. A propeptide spanning residues 26–45 is cleaved from the precursor; that stretch reads EDTENRNPAMAMPLQRMEQE.

The protein belongs to the xibalbin-2 family. Contains 5 disulfide bonds. In terms of tissue distribution, expressed by the venom gland. Not found in the whole body.

It is found in the secreted. In terms of biological role, probable neurotoxin. Moderately inhibits voltage-gated potassium channels (Kv1.1/KCNA1, Kv1.2/KCNA2, Kv1.3/KCNA3, and Kv1.6/KCNA6, with the highest toxicity against Kv1.6 (73.2% inhibition at 1 uM)) and weakly inhibits sodium channels (Nav1.4/SCN4A). Does not activate protein kinase A type II (PKA-II) and MAP kinase Erk1/2 in sensory neurons. Does not show cytotoxic activity. Does not have an impact on Ca2+, cAMP, and NO signaling in the cell types analyzed. Does not interfere with the adhesion of leukocytes to endothelial cells. Moderately inhibits voltage-gated potassium channels (Kv1.1/KCNA1, Kv1.2/KCNA2, Kv1.3/KCNA3, and Kv1.6/KCNA6, with the highest toxicity against Kv1.6 (75.9% inhibition at 1 uM)). Does not activate protein kinase A type II (PKA-II) and MAP kinase Erk1/2 in sensory neurons. Does not show cytotoxic activity. Does not have an impact on Ca2+, cAMP, and NO signaling in the cell types analyzed. Does not interfere with the adhesion of leukocytes to endothelial cells. The polypeptide is Xibalbin-2 (Xibalbanus tulumensis (Blind cave remipede)).